A 199-amino-acid polypeptide reads, in one-letter code: Putative rhomboid protease YdcA (199 aa).

Transmembrane regions (helical) follow at residues 14 to 34, 65 to 85, 97 to 117, 122 to 142, 147 to 167, and 172 to 192; these read LYPVVTFILALQAVLWLFFSL, ILLHAGFTHLLFNSMSIFLFA, FLLVYAGSGIIGNIGTYVTEP, HVGASGAIFGLFGVYLFMVLF, IGQEHSKMIITLLAFAVLMSF, and INMMAHLFGLCGGFLLSFLCV. The Nucleophile role is filled by Ser126. The Charge relay system role is filled by His177.

Belongs to the peptidase S54 family.

It is found in the cell membrane. This chain is Putative rhomboid protease YdcA (ydcA), found in Bacillus subtilis (strain 168).